Here is a 213-residue protein sequence, read N- to C-terminus: Translation initiation factor IF-3 (213 aa).

Residues 178–213 (VKTLIKSEKPEKPEKPEKSEKTEKQGPSTPPAPSAS) form a disordered region. A compositionally biased stretch (basic and acidic residues) spans 182 to 201 (IKSEKPEKPEKPEKSEKTEK).

The protein belongs to the IF-3 family. In terms of assembly, monomer.

The protein localises to the cytoplasm. Its function is as follows. IF-3 binds to the 30S ribosomal subunit and shifts the equilibrium between 70S ribosomes and their 50S and 30S subunits in favor of the free subunits, thus enhancing the availability of 30S subunits on which protein synthesis initiation begins. In Solibacter usitatus (strain Ellin6076), this protein is Translation initiation factor IF-3.